Reading from the N-terminus, the 148-residue chain is Large ribosomal subunit protein uL15 (148 aa).

The segment at 1–57 (MRLNDVKPQKGSKKRRRRVGRGISAGQGASAGLGMRGQKSRSGSGTRPGFEGGQQPL) is disordered. Residues 10–20 (KGSKKRRRRVG) show a composition bias toward basic residues. Over residues 23–35 (ISAGQGASAGLGM) the composition is skewed to gly residues.

This sequence belongs to the universal ribosomal protein uL15 family. In terms of assembly, part of the 50S ribosomal subunit.

Its function is as follows. Binds to the 23S rRNA. In Nostoc sp. (strain PCC 7120 / SAG 25.82 / UTEX 2576), this protein is Large ribosomal subunit protein uL15.